Consider the following 276-residue polypeptide: Large ribosomal subunit protein uL2c (276 aa).

The segment at 221-276 is disordered; the sequence is RGSVMNPVDHPHGGGEGRAPIGRSRPVTPWGKPALGQKTRKPKKQSNKLILRKRKK. A compositionally biased stretch (basic residues) spans 258–276; that stretch reads KTRKPKKQSNKLILRKRKK.

The protein belongs to the universal ribosomal protein uL2 family. In terms of assembly, part of the 50S ribosomal subunit.

Its subcellular location is the plastid. The protein resides in the chloroplast. This Stigeoclonium helveticum (Green alga) protein is Large ribosomal subunit protein uL2c (rpl2).